The sequence spans 523 residues: 2-isopropylmalate synthase (523 aa).

In terms of domain architecture, Pyruvate carboxyltransferase spans 5–267 (VIIFDTTLRD…HTAINHQEIW (263 aa)). Mn(2+)-binding residues include aspartate 14, histidine 202, histidine 204, and asparagine 238. A regulatory domain region spans residues 392 to 523 (RLDYFSVQSG…QHNENNKETV (132 aa)).

This sequence belongs to the alpha-IPM synthase/homocitrate synthase family. LeuA type 1 subfamily. As to quaternary structure, homodimer. It depends on Mn(2+) as a cofactor.

The protein localises to the cytoplasm. It carries out the reaction 3-methyl-2-oxobutanoate + acetyl-CoA + H2O = (2S)-2-isopropylmalate + CoA + H(+). The protein operates within amino-acid biosynthesis; L-leucine biosynthesis; L-leucine from 3-methyl-2-oxobutanoate: step 1/4. Its function is as follows. Catalyzes the condensation of the acetyl group of acetyl-CoA with 3-methyl-2-oxobutanoate (2-ketoisovalerate) to form 3-carboxy-3-hydroxy-4-methylpentanoate (2-isopropylmalate). The polypeptide is 2-isopropylmalate synthase (Escherichia coli O45:K1 (strain S88 / ExPEC)).